The chain runs to 397 residues: S-adenosylmethionine synthase (397 aa).

H16 contributes to the ATP binding site. Mg(2+) is bound at residue D18. A K(+)-binding site is contributed by E44. Residues E57 and Q100 each coordinate L-methionine. The tract at residues 100 to 110 is flexible loop; sequence QSPDIAQGVNE. ATP contacts are provided by residues 175-177, 242-243, D251, 257-258, A274, and K278; these read DAK, RF, and RK. D251 provides a ligand contact to L-methionine. K282 contacts L-methionine.

The protein belongs to the AdoMet synthase family. Homotetramer; dimer of dimers. Mg(2+) serves as cofactor. The cofactor is K(+).

It is found in the cytoplasm. The catalysed reaction is L-methionine + ATP + H2O = S-adenosyl-L-methionine + phosphate + diphosphate. The protein operates within amino-acid biosynthesis; S-adenosyl-L-methionine biosynthesis; S-adenosyl-L-methionine from L-methionine: step 1/1. Functionally, catalyzes the formation of S-adenosylmethionine (AdoMet) from methionine and ATP. The overall synthetic reaction is composed of two sequential steps, AdoMet formation and the subsequent tripolyphosphate hydrolysis which occurs prior to release of AdoMet from the enzyme. The protein is S-adenosylmethionine synthase of Streptococcus thermophilus (strain ATCC BAA-250 / LMG 18311).